The sequence spans 324 residues: Glyoxylate/hydroxypyruvate reductase B (324 aa).

Residues Arg-237 and Glu-266 contribute to the active site. Residue His-285 is the Proton donor of the active site.

The protein belongs to the D-isomer specific 2-hydroxyacid dehydrogenase family. GhrB subfamily. Homodimer.

It is found in the cytoplasm. The enzyme catalyses glycolate + NADP(+) = glyoxylate + NADPH + H(+). It carries out the reaction (R)-glycerate + NAD(+) = 3-hydroxypyruvate + NADH + H(+). The catalysed reaction is (R)-glycerate + NADP(+) = 3-hydroxypyruvate + NADPH + H(+). Functionally, catalyzes the NADPH-dependent reduction of glyoxylate and hydroxypyruvate into glycolate and glycerate, respectively. This Citrobacter koseri (strain ATCC BAA-895 / CDC 4225-83 / SGSC4696) protein is Glyoxylate/hydroxypyruvate reductase B.